Here is an 84-residue protein sequence, read N- to C-terminus: Double gene block protein 2 (84 aa).

Residues 1-4 (MPSA) lie on the Lumenal side of the membrane. The chain crosses the membrane as a helical span at residues 5–25 (NLHPIVLTGVIGLMLLIRLRC). The Cytoplasmic portion of the chain corresponds to 26–30 (TFTST). Residues 31-51 (FSLPPLVTLNQIIALSFCGLL) traverse the membrane as a helical segment. The Lumenal segment spans residues 52-84 (LNSISRAERACYYNYSVDSSKQQHISISTPNGK).

It belongs to the carmovirus double gene block protein 2 family.

The protein localises to the host endoplasmic reticulum membrane. In terms of biological role, cell-to-cell movement function. The polypeptide is Double gene block protein 2 (Carnation mottle virus (isolate China/Shanghai) (CarMV)).